The primary structure comprises 1976 residues: Myosin-10 (1976 aa).

Residue Arg-18 is modified to Omega-N-methylarginine. The region spanning 31–81 (TAKKLVWIPSERHGFEAASIKEERGDEVMVELAENGKKAMVNKDDIQKMNP) is the Myosin N-terminal SH3-like domain. The Myosin motor domain maps to 85–783 (SKVEDMAELT…VLAHLEEERD (699 aa)). 178–185 (GESGAGKT) is an ATP binding site. Leu-214 bears the Phosphoserine mark. An N6-acetyllysine modification is found at Lys-442. The interval 661 to 683 (LTKLMATLRNTNPNFVRCIIPNH) is actin-binding. The region spanning 786-815 (ITDIIIFFQAVCRGYLARKAFAKKQQQLSA) is the IQ domain. The stretch at 845 to 1976 (LQVTRQEEEL…VNETQPPQSE (1132 aa)) forms a coiled coil. The segment at 1127 to 1147 (FESEKASRNKAEKQKRDLSEE) is disordered. Residues 1129 to 1147 (SEKASRNKAEKQKRDLSEE) are compositionally biased toward basic and acidic residues. Position 1145 is a phosphoserine (Ser-1145). An N6-acetyllysine mark is found at Lys-1241, Lys-1301, and Lys-1645. Disordered regions lie at residues 1697 to 1728 (ASSE…SALL) and 1872 to 1976 (MEKA…PQSE). A compositionally biased stretch (basic and acidic residues) spans 1698–1708 (SSERARRHAEQ). Omega-N-methylarginine is present on Arg-1930. Phosphoserine is present on residues Ser-1935, Ser-1937, Ser-1938, and Ser-1939. Arg-1940 carries the omega-N-methylarginine modification. Ser-1952 and Ser-1956 each carry phosphoserine. A Phosphothreonine modification is found at Thr-1960. A compositionally biased stretch (polar residues) spans 1967 to 1976 (VNETQPPQSE). Ser-1975 is subject to Phosphoserine.

It belongs to the TRAFAC class myosin-kinesin ATPase superfamily. Myosin family. In terms of assembly, myosin is a hexameric protein that consists of 2 heavy chain subunits (MHC), 2 alkali light chain subunits (MLC) and 2 regulatory light chain subunits (MLC-2). Interacts with PLEKHG6. Interacts with ECPAS. Interacts with KIF26B. Interacts with LARP6. Interacts with MCC. Interacts with CFAP95. As to quaternary structure, (Microbial infection) Interacts with herpes simplex virus 1/HHV-1 envelope glycoprotein B. Post-translationally, phosphorylated by ABL2. In terms of tissue distribution, isoform 1 is expressed in cerebellum and spinal chord. Isoform 2 is expressed in cerebrum and retina. Isoform 3 is expressed in the cerebrum and to a much lower extent in cerebellum.

It localises to the cell projection. It is found in the lamellipodium. The protein localises to the cell membrane. In terms of biological role, cellular myosin that appears to play a role in cytokinesis, cell shape, and specialized functions such as secretion and capping. Involved with LARP6 in the stabilization of type I collagen mRNAs for CO1A1 and CO1A2. During cell spreading, plays an important role in cytoskeleton reorganization, focal contacts formation (in the central part but not the margins of spreading cells), and lamellipodial extension; this function is mechanically antagonized by MYH9. Functionally, (Microbial infection) Acts as a receptor for herpes simplex virus 1/HHV-1 envelope glycoprotein B. This Homo sapiens (Human) protein is Myosin-10 (MYH10).